The chain runs to 1386 residues: Putative ATP-dependent RNA helicase DHX57 (1386 aa).

Residues 1–11 (MSSSVRRKGKP) are compositionally biased toward basic residues. Disordered regions lie at residues 1–106 (MSSS…MTSE) and 120–147 (EQDA…NDER). 2 stretches are compositionally biased toward gly residues: residues 12 to 23 (GKGGGKGSSRGG) and 35 to 50 (GSGG…GGGN). The stretch at 101 to 125 (LHMTSENQEKVKALLRDLQEQDADA) forms a coiled coil. Serine 127 and serine 132 each carry phosphoserine. The span at 133-143 (GEEEDDEPDCC) shows a compositional bias: acidic residues. The UBA domain occupies 180–220 (TVSPFAVQKLSRYGFNTERCQAVLRMCDGDVGASLEHLLTQ). The C3H1-type zinc finger occupies 299–326 (ENSLEICKFYLKGNCKFGSKCRFKHEVP). Phosphoserine occurs at positions 475, 477, and 480. The Helicase ATP-binding domain occupies 554–721 (LNLLRKHQVV…FNSCPVITIP (168 aa)). 567–574 (GMTGCGKT) serves as a coordination point for ATP. The short motif at 668 to 671 (DEVH) is the DEVH box element. The Helicase C-terminal domain maps to 830–1010 (LIEALLEWIV…QLCLRIKILE (181 aa)).

The protein belongs to the DEAD box helicase family. DEAH subfamily.

It carries out the reaction ATP + H2O = ADP + phosphate + H(+). Probable ATP-binding RNA helicase. This chain is Putative ATP-dependent RNA helicase DHX57 (DHX57), found in Homo sapiens (Human).